The chain runs to 423 residues: Glutamate-1-semialdehyde 2,1-aminomutase (423 aa).

At Lys-258 the chain carries N6-(pyridoxal phosphate)lysine.

This sequence belongs to the class-III pyridoxal-phosphate-dependent aminotransferase family. HemL subfamily. The cofactor is pyridoxal 5'-phosphate.

It is found in the cytoplasm. The catalysed reaction is (S)-4-amino-5-oxopentanoate = 5-aminolevulinate. Its pathway is porphyrin-containing compound metabolism; protoporphyrin-IX biosynthesis; 5-aminolevulinate from L-glutamyl-tRNA(Glu): step 2/2. The protein is Glutamate-1-semialdehyde 2,1-aminomutase of Pyrobaculum aerophilum (strain ATCC 51768 / DSM 7523 / JCM 9630 / CIP 104966 / NBRC 100827 / IM2).